Reading from the N-terminus, the 91-residue chain is Potassium channel toxin BuTXK-beta (91 aa).

Positions 1–20 (MQRNLVVLLLLGMVALSSCG) are cleaved as a signal peptide. Positions 21 to 27 (LREKHFQ) are excised as a propeptide. One can recognise a BetaSPN-type CS-alpha/beta domain in the interval 54-91 (QFGCPAYQGYCDDHCQDIKKEEGFCHGMKCKCGIPMGF). Disulfide bonds link C57-C78, C64-C83, and C68-C85.

This sequence belongs to the long chain scorpion toxin family. Class 1 subfamily. Expressed by the venom gland.

Its subcellular location is the secreted. Inhibits voltage-gated potassium channel. In Buthus israelis (Israeli scorpion), this protein is Potassium channel toxin BuTXK-beta.